A 387-amino-acid chain; its full sequence is UPF0400 protein C337.03 (387 aa).

A CID domain is found at Met1 to Glu133. Residues Lys177–Ser255 are a coiled coil. A disordered region spans residues Thr257–Ser387. The span at Ser283 to Pro297 shows a compositional bias: low complexity. A compositionally biased stretch (polar residues) spans Gln298–Asn323. Residues Asn353–Asp365 show a composition bias toward acidic residues. Residues Asp370–Ser379 are compositionally biased toward low complexity. Ser372 is subject to Phosphoserine.

It belongs to the UPF0400 (RTT103) family.

In Schizosaccharomyces pombe (strain 972 / ATCC 24843) (Fission yeast), this protein is UPF0400 protein C337.03.